Reading from the N-terminus, the 254-residue chain is Acetylglutamate kinase (254 aa).

Substrate-binding positions include Gly-40–Gly-41, Arg-62, and Asn-158.

The protein belongs to the acetylglutamate kinase family. ArgB subfamily.

It is found in the cytoplasm. The enzyme catalyses N-acetyl-L-glutamate + ATP = N-acetyl-L-glutamyl 5-phosphate + ADP. It functions in the pathway amino-acid biosynthesis; L-arginine biosynthesis; N(2)-acetyl-L-ornithine from L-glutamate: step 2/4. Functionally, catalyzes the ATP-dependent phosphorylation of N-acetyl-L-glutamate. In Chloroflexus aggregans (strain MD-66 / DSM 9485), this protein is Acetylglutamate kinase.